Consider the following 829-residue polypeptide: DNA ligase (829 aa).

The tract at residues 1–23 (MPAQTSRARPVEEMTAAQAREAH) is disordered. Residues 47–51 (DAEYD), 96–97 (SL), and glutamate 130 each bind NAD(+). The active-site N6-AMP-lysine intermediate is the lysine 132. NAD(+) is bound by residues arginine 153, glutamate 190, lysine 306, and lysine 330. Positions 453, 456, 477, and 483 each coordinate Zn(2+). The region spanning 750 to 829 (AAAAVFSGQT…AEWLAMVEAA (80 aa)) is the BRCT domain.

It belongs to the NAD-dependent DNA ligase family. LigA subfamily. Mg(2+) serves as cofactor. The cofactor is Mn(2+).

The enzyme catalyses NAD(+) + (deoxyribonucleotide)n-3'-hydroxyl + 5'-phospho-(deoxyribonucleotide)m = (deoxyribonucleotide)n+m + AMP + beta-nicotinamide D-nucleotide.. Functionally, DNA ligase that catalyzes the formation of phosphodiester linkages between 5'-phosphoryl and 3'-hydroxyl groups in double-stranded DNA using NAD as a coenzyme and as the energy source for the reaction. It is essential for DNA replication and repair of damaged DNA. The protein is DNA ligase of Methylobacterium nodulans (strain LMG 21967 / CNCM I-2342 / ORS 2060).